The sequence spans 78 residues: Small ribosomal subunit protein bS18 (78 aa).

This sequence belongs to the bacterial ribosomal protein bS18 family. As to quaternary structure, part of the 30S ribosomal subunit. Forms a tight heterodimer with protein bS6.

In terms of biological role, binds as a heterodimer with protein bS6 to the central domain of the 16S rRNA, where it helps stabilize the platform of the 30S subunit. The protein is Small ribosomal subunit protein bS18 of Frankia casuarinae (strain DSM 45818 / CECT 9043 / HFP020203 / CcI3).